The following is a 199-amino-acid chain: Pneumococcal vaccine antigen A homolog (199 aa).

The protein resides in the cell surface. The chain is Pneumococcal vaccine antigen A homolog (pvaA) from Streptococcus pyogenes serotype M6 (strain ATCC BAA-946 / MGAS10394).